The chain runs to 835 residues: Microcephalin (835 aa).

The BRCT 1 domain maps to 1 to 93 (MAAPILKDVV…AHIDESLFPA (93 aa)). Residues 184-206 (KEKRENLSPTSSQLIQQSHDNPS) are disordered. Over residues 190–206 (LSPTSSQLIQQSHDNPS) the composition is skewed to polar residues. Ser279, Ser287, Ser296, and Ser333 each carry phosphoserine. Phosphothreonine is present on Thr335. The segment covering 346 to 361 (HSRPRSSSVKRKRVSH) has biased composition (basic residues). Disordered stretches follow at residues 346-376 (HSRPRSSSVKRKRVSHGSHSPPKEKCKRKRS) and 418-442 (PDNLKERNSENLPPESQLPSSPAQF). Phosphoserine is present on Ser548. The tract at residues 557–582 (GLKSTQNRGTTSKISNSSEGEAQSEH) is disordered. Residues 559–577 (KSTQNRGTTSKISNSSEGE) are compositionally biased toward polar residues. 2 consecutive BRCT domains span residues 640–730 (SGRG…PFEL) and 751–833 (YRGT…NYLL).

As to quaternary structure, interacts with CDC27 and maybe other components of the APC/C complex. Interacts with histone variant H2AX under DNA damage conditions.

It localises to the cytoplasm. The protein localises to the cytoskeleton. It is found in the microtubule organizing center. Its subcellular location is the centrosome. In terms of biological role, implicated in chromosome condensation and DNA damage induced cellular responses. May play a role in neurogenesis and regulation of the size of the cerebral cortex. This Gorilla gorilla gorilla (Western lowland gorilla) protein is Microcephalin.